Reading from the N-terminus, the 141-residue chain is MKRALYLNKQYIPWGILNHKTLKNETVVLEKYNEINSSIGPVFHCKNLFVDSCDKDFVYFFVNKKFFPNVKKLYLASNPCSPEVLWRDFDTIYLTEIFSHYKNQWANNYKNVKIIPNNKFFYELQDYAPERIILEKEHDLY.

The protein belongs to the mimivirus L163/R849 family.

This is an uncharacterized protein from Acanthamoeba polyphaga mimivirus (APMV).